Here is a 222-residue protein sequence, read N- to C-terminus: Type II restriction enzyme AbrI (222 aa).

Disordered stretches follow at residues 21–45 (GNRE…RRDR) and 161–222 (NQRR…SPRI). Over residues 22–42 (NREKARQKQQESGKPDQGERR) the composition is skewed to basic and acidic residues. A compositionally biased stretch (low complexity) spans 188-202 (SSASGSSRSSFTPRP).

The protein belongs to the XhoI type II restriction endonuclease family.

The catalysed reaction is Endonucleolytic cleavage of DNA to give specific double-stranded fragments with terminal 5'-phosphates.. Functionally, a P subtype restriction enzyme that recognizes the double-stranded sequence 5'-CTCGAG-3' and cleaves after C-1. This chain is Type II restriction enzyme AbrI (abrIR), found in Azospirillum brasilense.